A 451-amino-acid polypeptide reads, in one-letter code: DNA polymerase delta subunit 3 (451 aa).

Disordered regions lie at residues 187-241 (SQAK…AASS), 259-386 (KQTP…KVLR), and 404-451 (AWES…FAKK). The segment covering 200–216 (PSTSQVKEAPKASQTVE) has biased composition (polar residues). A compositionally biased stretch (low complexity) spans 225-241 (SAPAKKGSSAPKSAASS). Residues 306–316 (QREEELRRMME) show a composition bias toward basic and acidic residues. Over residues 329–353 (EEEEEEEEEEESEHEQLPAEEEPMA) the composition is skewed to acidic residues. Residues 354 to 366 (EEPKAPEPVKEEP) are compositionally biased toward basic and acidic residues. Over residues 376–386 (GRRRGKRKVLR) the composition is skewed to basic residues. The PIP-box signature appears at 441 to 448 (QGSIMSWF).

As to quaternary structure, component of the DNA polymerase delta complex which consists of PolD1, PolD2, PolD3 and PolD4, with PolD1 bearing DNA polymerase and 3' to 5' proofreading exonuclease activities. Directly interacts with PCNA.

It localises to the nucleus. In terms of biological role, accessory component of the DNA polymerase delta complex. The complex is required for the maintenance of genome integrity, acting in concert with the sliding clamp processivity factor PCNA. The protein is DNA polymerase delta subunit 3 of Chaetomium thermophilum (strain DSM 1495 / CBS 144.50 / IMI 039719) (Thermochaetoides thermophila).